Consider the following 185-residue polypeptide: Large ribosomal subunit protein bL25 (185 aa).

It belongs to the bacterial ribosomal protein bL25 family. CTC subfamily. As to quaternary structure, part of the 50S ribosomal subunit; part of the 5S rRNA/L5/L18/L25 subcomplex. Contacts the 5S rRNA. Binds to the 5S rRNA independently of L5 and L18.

This is one of the proteins that binds to the 5S RNA in the ribosome where it forms part of the central protuberance. The sequence is that of Large ribosomal subunit protein bL25 from Chlamydia trachomatis serovar D (strain ATCC VR-885 / DSM 19411 / UW-3/Cx).